The sequence spans 95 residues: Aspartyl/glutamyl-tRNA(Asn/Gln) amidotransferase subunit C (95 aa).

It belongs to the GatC family. In terms of assembly, heterotrimer of A, B and C subunits.

It catalyses the reaction L-glutamyl-tRNA(Gln) + L-glutamine + ATP + H2O = L-glutaminyl-tRNA(Gln) + L-glutamate + ADP + phosphate + H(+). It carries out the reaction L-aspartyl-tRNA(Asn) + L-glutamine + ATP + H2O = L-asparaginyl-tRNA(Asn) + L-glutamate + ADP + phosphate + 2 H(+). In terms of biological role, allows the formation of correctly charged Asn-tRNA(Asn) or Gln-tRNA(Gln) through the transamidation of misacylated Asp-tRNA(Asn) or Glu-tRNA(Gln) in organisms which lack either or both of asparaginyl-tRNA or glutaminyl-tRNA synthetases. The reaction takes place in the presence of glutamine and ATP through an activated phospho-Asp-tRNA(Asn) or phospho-Glu-tRNA(Gln). The protein is Aspartyl/glutamyl-tRNA(Asn/Gln) amidotransferase subunit C of Lysinibacillus sphaericus (strain C3-41).